The chain runs to 361 residues: Peptide chain release factor 1 (361 aa).

N5-methylglutamine is present on glutamine 237. Residues 283-307 (AQQQEQQEQQSSTRKELIGSGDRSQ) form a disordered region.

The protein belongs to the prokaryotic/mitochondrial release factor family. Methylated by PrmC. Methylation increases the termination efficiency of RF1.

The protein localises to the cytoplasm. Its function is as follows. Peptide chain release factor 1 directs the termination of translation in response to the peptide chain termination codons UAG and UAA. In Vesicomyosocius okutanii subsp. Calyptogena okutanii (strain HA), this protein is Peptide chain release factor 1.